A 597-amino-acid chain; its full sequence is Probable translation initiation factor IF-2 (597 aa).

The tr-type G domain maps to 8 to 225 (LRQPIVVVLG…LLAGLTQQYL (218 aa)). Residues 17–24 (GHVDHGKT) are G1. 17–24 (GHVDHGKT) contacts GTP. The G2 stretch occupies residues 42 to 46 (EMTQE). Residues 81 to 84 (DTPG) are G3. GTP contacts are provided by residues 81–85 (DTPGH) and 135–138 (NKID). The G4 stretch occupies residues 135–138 (NKID). The interval 203–205 (SGK) is G5.

The protein belongs to the TRAFAC class translation factor GTPase superfamily. Classic translation factor GTPase family. IF-2 subfamily.

Its function is as follows. Function in general translation initiation by promoting the binding of the formylmethionine-tRNA to ribosomes. Seems to function along with eIF-2. The sequence is that of Probable translation initiation factor IF-2 from Metallosphaera sedula (strain ATCC 51363 / DSM 5348 / JCM 9185 / NBRC 15509 / TH2).